The chain runs to 647 residues: UvrABC system protein C (647 aa).

The region spanning 16–95 (VEPGVYRFRD…IKEFDPRFNI (80 aa)) is the GIY-YIG domain. The UVR domain maps to 208 to 243 (DRYARDLERKMSAAAEQLDFERAARLRDDLFALKRA).

The protein belongs to the UvrC family. Interacts with UvrB in an incision complex.

The protein localises to the cytoplasm. Functionally, the UvrABC repair system catalyzes the recognition and processing of DNA lesions. UvrC both incises the 5' and 3' sides of the lesion. The N-terminal half is responsible for the 3' incision and the C-terminal half is responsible for the 5' incision. In Mycobacterium leprae (strain Br4923), this protein is UvrABC system protein C.